Reading from the N-terminus, the 60-residue chain is UPF0337 protein asr4653 (60 aa).

The protein belongs to the UPF0337 (CsbD) family.

In Nostoc sp. (strain PCC 7120 / SAG 25.82 / UTEX 2576), this protein is UPF0337 protein asr4653.